Reading from the N-terminus, the 438-residue chain is uncharacterized protein (438 aa).

The 171-residue stretch at 23–193 (IHAKPPVVVV…VNATIRLTAA (171 aa)) folds into the FAD-binding PCMH-type domain. Residues 55 to 59 (VRGSG), 60 to 61 (HS), Gln65, Asp117, Thr122, 128 to 132 (SVGGF), Ile183, Tyr393, and 430 to 433 (APGY) contribute to the FAD site. Position 60 is a pros-8alpha-FAD histidine (His60).

The protein belongs to the oxygen-dependent FAD-linked oxidoreductase family. It depends on FAD as a cofactor.

Functionally, the FAS-operon encodes genes involved in cytokinin production and in host plant fasciation (leafy gall). This is an uncharacterized protein from Rhodococcoides fascians (Rhodococcus fascians).